Consider the following 187-residue polypeptide: Keratin-associated protein 5-8 (187 aa).

9 repeat units span residues 28-31 (CCVP), 34-37 (CCKP), 40-43 (CCVP), 109-112 (CCKP), 119-122 (CCKP), 138-141 (CCKP), 148-151 (CCKP), 167-170 (CCKP), and 177-180 (CCVP). The tract at residues 28-180 (CCVPICCCKP…CCSQSSCCVP (153 aa)) is 9 X 4 AA repeats of C-C-X-P.

The protein belongs to the KRTAP type 5 family. In terms of tissue distribution, restricted to hair root, not detected in any other tissues. Expressed in cuticle layers of differentiating hair follicles.

In the hair cortex, hair keratin intermediate filaments are embedded in an interfilamentous matrix, consisting of hair keratin-associated protein (KRTAP), which are essential for the formation of a rigid and resistant hair shaft through their extensive disulfide bond cross-linking with abundant cysteine residues of hair keratins. The matrix proteins include the high-sulfur and high-glycine-tyrosine keratins. This Homo sapiens (Human) protein is Keratin-associated protein 5-8 (KRTAP5-8).